The following is a 282-amino-acid chain: Biotin synthase (282 aa).

Residues 1-228 (MQEIFLCSIS…NARLMVAGGR (228 aa)) form the Radical SAM core domain. Cys-17, Cys-21, and Cys-24 together coordinate [4Fe-4S] cluster. [2Fe-2S] cluster-binding residues include Cys-61, Cys-96, Cys-154, and Arg-221.

The protein belongs to the radical SAM superfamily. Biotin synthase family. In terms of assembly, homodimer. [4Fe-4S] cluster serves as cofactor. The cofactor is [2Fe-2S] cluster.

The catalysed reaction is (4R,5S)-dethiobiotin + (sulfur carrier)-SH + 2 reduced [2Fe-2S]-[ferredoxin] + 2 S-adenosyl-L-methionine = (sulfur carrier)-H + biotin + 2 5'-deoxyadenosine + 2 L-methionine + 2 oxidized [2Fe-2S]-[ferredoxin]. It functions in the pathway cofactor biosynthesis; biotin biosynthesis; biotin from 7,8-diaminononanoate: step 2/2. Functionally, catalyzes the conversion of dethiobiotin (DTB) to biotin by the insertion of a sulfur atom into dethiobiotin via a radical-based mechanism. The sequence is that of Biotin synthase from Helicobacter pylori (strain P12).